We begin with the raw amino-acid sequence, 207 residues long: M-zodatoxin-Lt4a (207 aa).

An N-terminal signal peptide occupies residues 1–22 (MKFSIIALALAVAFVCVAESRS). Positions 23–43 (EEEGYDVSEEIQAEELEEAER) are excised as a propeptide. Positions 40–43 (EAER) match the Processing quadruplet motif 1 motif. The residue at position 61 (Gln-61) is a Glutamine amide. Residues 63–66 (REDS) carry the Inverted processing quadruplet motif 1 motif. Positions 63-71 (REDSEEAGR) are excised as a propeptide. The Processing quadruplet motif 2 motif lies at 68–71 (EAGR). Position 89 is a glutamine amide (Gln-89). An Inverted processing quadruplet motif 2 motif is present at residues 91–94 (REDS). A propeptide spanning residues 91–99 (REDSEEAGR) is cleaved from the precursor. Positions 96–99 (EAGR) match the Processing quadruplet motif 3 motif. Gln-117 is subject to Glutamine amide. Residues 119–122 (REDS) carry the Inverted processing quadruplet motif 3 motif. Positions 119–127 (REDSEEAGR) are excised as a propeptide. The short motif at 124-127 (EAGR) is the Processing quadruplet motif 4 element. Gln-145 is modified (glutamine amide). An Inverted processing quadruplet motif 4 motif is present at residues 147-150 (REDS). Residues 147–155 (REDSEEAGR) constitute a propeptide that is removed on maturation. A Processing quadruplet motif 5 motif is present at residues 152 to 155 (EAGR). The residue at position 173 (Gln-173) is a Glutamine amide. The Inverted processing quadruplet motif 5 motif lies at 175–178 (REDT). Residues 175 to 182 (REDTEEAR) constitute a propeptide that is removed on maturation. Residues 179 to 182 (EEAR) carry the Processing quadruplet motif 6 motif. At Phe-206 the chain carries Phenylalanine amide.

It belongs to the cationic peptide 03 (latarcin) family. 04 subfamily. Cleavage of the propeptide depends on the processing quadruplet motif (PQM) (XXXR, with at least one of X being E) and the inverted PQM (RXXX, with at least one of X being E). Expressed by the venom gland.

Its subcellular location is the secreted. Its function is as follows. M-zodatoxin-Lt4a: Has antimicrobial activity against Gram-positive bacteria (A.globiformis VKM Ac-1112 (MIC=0.3 uM), and B.subtilis VKM B-501 (MIC=1.1 uM)), Gram-negative bacteria (E.coli DH5-alpha (MIC=4.5 uM), E.coli MH1 (MIC=3.2 uM), and P.aeruginosa PAO1 (MIC&gt;35 uM)), and yeasts (P.pastoris GS115 (MIC=36 uM), and S.cerevisiae Y190 (MIC=18 uM)). Does not have hemolytic activity against rabbit erythrocytes. Causes paralysis, but is not lethal when injected into insect (M.domestica) larvae. In terms of biological role, shows no antimicrobial activity against Gram-positive bacterium B.subtilis B-501 or Gram-negative bacterium E.coli DH5-alpha at concentrations up to 20 uM. Shows no antimicrobial activity against Gram-positive bacterium B.subtilis B-501 or Gram-negative bacterium E.coli DH5-alpha at concentrations up to 20 uM. Shows no toxicity towards insect (S.carnaria) larvae. This chain is M-zodatoxin-Lt4a, found in Lachesana tarabaevi (Spider).